Here is a 312-residue protein sequence, read N- to C-terminus: Acetyl-coenzyme A carboxylase carboxyl transferase subunit alpha (312 aa).

The CoA carboxyltransferase C-terminal domain occupies 32-286 (LLEERLARLR…KEALLKALEE (255 aa)).

Belongs to the AccA family. Acetyl-CoA carboxylase is a heterohexamer composed of biotin carboxyl carrier protein (AccB), biotin carboxylase (AccC) and two subunits each of ACCase subunit alpha (AccA) and ACCase subunit beta (AccD).

The protein localises to the cytoplasm. It carries out the reaction N(6)-carboxybiotinyl-L-lysyl-[protein] + acetyl-CoA = N(6)-biotinyl-L-lysyl-[protein] + malonyl-CoA. It functions in the pathway lipid metabolism; malonyl-CoA biosynthesis; malonyl-CoA from acetyl-CoA: step 1/1. Its function is as follows. Component of the acetyl coenzyme A carboxylase (ACC) complex. First, biotin carboxylase catalyzes the carboxylation of biotin on its carrier protein (BCCP) and then the CO(2) group is transferred by the carboxyltransferase to acetyl-CoA to form malonyl-CoA. The sequence is that of Acetyl-coenzyme A carboxylase carboxyl transferase subunit alpha from Thermus thermophilus (strain ATCC BAA-163 / DSM 7039 / HB27).